A 211-amino-acid chain; its full sequence is MTLQIQFKKYELPPLPYKIDALEPYISKDIIDVHYNGHHKGYVNGANSLLERLEKVVKGDLQTGQYDIQGIIRGLTFNINGHKLHALYWENMAPSGKGGGKPGGALADLINKQYGSFDRFKQVFTETANSLPGTGWAVLYYDTESGNLQIMTFENHFQNHIAEIPIILILDEFEHAYYLQYKNKRADYVNAWWNVVNWDAAEKKLQKYLTK.

Fe cation is bound by residues His-34, His-85, Asp-171, and His-175.

Belongs to the iron/manganese superoxide dismutase family. Homotetramer. Requires Fe cation as cofactor.

The protein resides in the cytoplasm. It catalyses the reaction 2 superoxide + 2 H(+) = H2O2 + O2. Functionally, destroys superoxide anion radicals which are normally produced within the cells and which are toxic to biological systems. This Saccharolobus solfataricus (strain ATCC 35092 / DSM 1617 / JCM 11322 / P2) (Sulfolobus solfataricus) protein is Superoxide dismutase [Fe] (sod).